The primary structure comprises 338 residues: Phenylalanine--tRNA ligase alpha subunit (338 aa).

Residue Glu-253 participates in Mg(2+) binding.

This sequence belongs to the class-II aminoacyl-tRNA synthetase family. Phe-tRNA synthetase alpha subunit type 1 subfamily. In terms of assembly, tetramer of two alpha and two beta subunits. Mg(2+) is required as a cofactor.

It is found in the cytoplasm. It carries out the reaction tRNA(Phe) + L-phenylalanine + ATP = L-phenylalanyl-tRNA(Phe) + AMP + diphosphate + H(+). This is Phenylalanine--tRNA ligase alpha subunit from Geotalea daltonii (strain DSM 22248 / JCM 15807 / FRC-32) (Geobacter daltonii).